A 338-amino-acid chain; its full sequence is Acyl-CoA Delta(11) desaturase (338 aa).

The next 2 membrane-spanning stretches (helical) occupy residues 33 to 53 and 61 to 81; these read IVYF…YGLY and WATV…VTAG. Residues 83–88 carry the Histidine box-1 motif; it reads HRLWSH. The chain crosses the membrane as a helical span at residues 97-117; the sequence is LQILLMVMNSLAFQNTVIDWV. The Histidine box-2 motif lies at 120–124; that stretch reads HRLHH. 2 helical membrane passes run 181 to 201 and 212 to 234; these read AIPF…VYGW and AMLR…HIYG. Residues 260 to 264 carry the Histidine box-3 motif; the sequence is HNYHH. The disordered stretch occupies residues 318–338; it reads TNLWGLEDVDTPEDLKNTKGE.

The protein belongs to the fatty acid desaturase type 1 family. Fe cation serves as cofactor. As to expression, detected in the pheromone gland.

Its subcellular location is the membrane. The catalysed reaction is an 11,12-saturated fatty acyl-CoA + 2 Fe(II)-[cytochrome b5] + O2 + 2 H(+) = an (11Z)-Delta(11)-fatty acyl-CoA + 2 Fe(III)-[cytochrome b5] + 2 H2O. In terms of biological role, catalyzes the formation of delta(11) fatty acyl precursors in the pheromone gland, and has high activity towards palmitic acid and stearic acid. The sequence is that of Acyl-CoA Delta(11) desaturase from Spodoptera littoralis (Egyptian cotton leafworm).